The chain runs to 140 residues: Transcription antitermination protein NusB (140 aa).

This sequence belongs to the NusB family.

In terms of biological role, involved in transcription antitermination. Required for transcription of ribosomal RNA (rRNA) genes. Binds specifically to the boxA antiterminator sequence of the ribosomal RNA (rrn) operons. The polypeptide is Transcription antitermination protein NusB (Alteromonas mediterranea (strain DSM 17117 / CIP 110805 / LMG 28347 / Deep ecotype)).